A 1012-amino-acid polypeptide reads, in one-letter code: MDSVSFFNPYLEANRLKKKSRSSYIRILPRGIMHDGAAGLIKDVCDSEPRMFYRDRQYLLSKEMTWPSLDIARSKDYDHMRMKFHIYDAVETLMFTDSIENLPFQYRHFVIPSGTVIRMFGRTEDGEKICVNVFGQEQYFYCECVDGRSLKATINNLMLTGEVKMSCSFVIEPADKLSLYGYNANTVVNLFKVSFGNFYVSQRIGKILQNEGFVVYEIDVDVLTRFFVDNGFLSFGWYNVKKYIPQDMGKGSNLEVEINCHVSDLVSLEDVNWPLYGCWSFDIECLGQNGNFPDAENLGDIVIQISVISFDTEGDRDERHLFTLGTCEKIDGVHIYEFASEFELLLGFFIFLRIESPEFITGYNINNFDLKYLCIRMDKIYHYDIGCFSKLKNGKIGISVPHEQYRKGFLQAQTKVFTSGVLYLDMYPVYSSKITAQNYKLDTIAKICLQQEKEQLSYKEIPKKFISGPSGRAVVGKYCLQDSVLVVRLFKQINYHFEVAEVARLAHVTARCVVFEGQQKKIFPCILTEAKRRNMILPSMVSSHNRQGIGYKGATVLEPKTGYYAVPTVVFDFQSLYPSIMMAHNLCYSTLVLDERQIAGLSESDILTVKLGDETHRFVKPCIRESVLGSLLKDWLAKRREVKAEMQNCSDPMMKLLLDKKQLALKTTCNSVYGVTGAAHGLLPCVAIAASVTCLGREMLCSTVDYVNSKMQSEQFFCEEFGLTSSDFTGDLEVEVIYGDTDSIFMSVRNMVNQSLRRIAPMIAKHITDRLFKSPIKLEFEKILCPLILICKKRYIGRQDDSLLIFKGVDLVRKTSCDFVKGVVKDIVDLLFFDEEVQTAAVEFSHMTQTQLREQGVPVGIHKILRRLCEAREELFQNRADVRHLMLSSVLSKEMAAYKQPNLAHLSVIRRLAQRKEEIPNVGDRIMYVLIAPSIGNKQTHNYELAEDPNYVIEHKIPIHAEKYFDQIIKAVTNAISPIFPKTDIKKEKLLLYLLPMKVYLDETFSAIAEVM.

It belongs to the DNA polymerase type-B family.

Its subcellular location is the host nucleus. The catalysed reaction is DNA(n) + a 2'-deoxyribonucleoside 5'-triphosphate = DNA(n+1) + diphosphate. The polypeptide is DNA polymerase catalytic subunit (U38) (Human herpesvirus 6A (strain Uganda-1102) (HHV-6 variant A)).